Consider the following 512-residue polypeptide: Glutathione-binding protein GsiB (512 aa).

The signal sequence occupies residues 1 to 26; it reads MARAVHRSGLVALGIATALMASCAFA.

The protein belongs to the bacterial solute-binding protein 5 family. As to quaternary structure, the complex is composed of two ATP-binding proteins (GsiA), two transmembrane proteins (GsiC and GsiD) and a solute-binding protein (GsiB).

It localises to the periplasm. Part of the ABC transporter complex GsiABCD involved in glutathione import. Binds glutathione. In Escherichia coli O6:K15:H31 (strain 536 / UPEC), this protein is Glutathione-binding protein GsiB.